A 22-amino-acid chain; its full sequence is Putative ORF3b protein (22 aa).

Functionally, acts as an interferon antagonist when expressed ex vivo. In Severe acute respiratory syndrome coronavirus 2 (2019-nCoV), this protein is Putative ORF3b protein.